The sequence spans 772 residues: Probable adenosine deaminase (772 aa).

The Zn(2+) site is built by His22 and His24. 3 residues coordinate substrate: His24, Asp26, and Gly180. His207 provides a ligand contact to Zn(2+). The Proton donor role is filled by Glu210. Residue Asp288 participates in Zn(2+) binding.

The protein belongs to the metallo-dependent hydrolases superfamily. Adenosine and AMP deaminases family. Zn(2+) is required as a cofactor.

The catalysed reaction is adenosine + H2O + H(+) = inosine + NH4(+). Catalyzes the hydrolytic deamination of adenosine. Plays an important role in purine metabolism and in adenosine homeostasis, and may thereby contribute to cellular signaling events. This is Probable adenosine deaminase (ada) from Dictyostelium discoideum (Social amoeba).